A 766-amino-acid polypeptide reads, in one-letter code: Subtilisin-like protease SBT3.13 (766 aa).

The first 21 residues, 1 to 21 (MNNSLQSSKLVLLLAIALVLF), serve as a signal peptide directing secretion. The propeptide at 22–120 (LNTELDFLTA…VIPNRIRKLK (99 aa)) is activation peptide. The region spanning 41-119 (VYIVYLGERE…HVIPNRIRKL (79 aa)) is the Inhibitor I9 domain. The 485-residue stretch at 134-618 (PTSFSSLSSV…GGLVNPEKAA (485 aa)) folds into the Peptidase S8 domain. The active-site Charge relay system is Asp-162. N-linked (GlcNAc...) asparagine glycans are attached at residues Asn-195 and Asn-223. His-239 (charge relay system) is an active-site residue. N-linked (GlcNAc...) asparagine glycans are attached at residues Asn-254 and Asn-389. Ser-549 serves as the catalytic Charge relay system. N-linked (GlcNAc...) asparagine glycosylation occurs at Asn-641.

The protein belongs to the peptidase S8 family.

It is found in the secreted. The protein is Subtilisin-like protease SBT3.13 of Arabidopsis thaliana (Mouse-ear cress).